Reading from the N-terminus, the 233-residue chain is 7-cyano-7-deazaguanine synthase (233 aa).

Residue 7-17 (LSGGLDSAVTS) participates in ATP binding. 4 residues coordinate Zn(2+): Cys-195, Cys-206, Cys-209, and Cys-212.

The protein belongs to the QueC family. Zn(2+) is required as a cofactor.

The enzyme catalyses 7-carboxy-7-deazaguanine + NH4(+) + ATP = 7-cyano-7-deazaguanine + ADP + phosphate + H2O + H(+). Its pathway is purine metabolism; 7-cyano-7-deazaguanine biosynthesis. Functionally, catalyzes the ATP-dependent conversion of 7-carboxy-7-deazaguanine (CDG) to 7-cyano-7-deazaguanine (preQ(0)). In Methanococcus maripaludis (strain DSM 14266 / JCM 13030 / NBRC 101832 / S2 / LL), this protein is 7-cyano-7-deazaguanine synthase.